The chain runs to 355 residues: Serine acetyltransferase 4 (355 aa).

Belongs to the transferase hexapeptide repeat family. Homomultimer. In terms of tissue distribution, localized in vascular tissues, particularly in phloem.

It is found in the cytoplasm. It carries out the reaction L-serine + acetyl-CoA = O-acetyl-L-serine + CoA. The protein operates within amino-acid biosynthesis; L-cysteine biosynthesis; L-cysteine from L-serine: step 1/2. Its activity is regulated as follows. Feedback inhibitions by L-Ser and acetyl-CoA. This Arabidopsis thaliana (Mouse-ear cress) protein is Serine acetyltransferase 4.